A 1039-amino-acid chain; its full sequence is Probable calcium-transporting ATPase 9, plasma membrane-type (1039 aa).

Topologically, residues 1–175 (MEKLDRYLQE…FVWDALQDMT (175 aa)) are cytoplasmic. Transmembrane regions (helical) follow at residues 176–196 (LIIL…TEGW) and 199–219 (GMYD…VTAV). The Cytoplasmic portion of the chain corresponds to 220–250 (SDYKQSLQFKELDNEKKKIFIHVTRDGRRQK). Helical transmembrane passes span 251–271 (ISIY…DQVP) and 353–373 (VATI…LVLL). At 374-406 (VRFLIDKGMTVGLLKWYSTDALTIVNYFATAVT) the chain is on the cytoplasmic side. Residues 407–427 (IIVVAVPEGLPLAVTLSLAFA) form a helical membrane-spanning segment. Aspartate 456 (4-aspartylphosphate intermediate) is an active-site residue. Mg(2+)-binding residues include aspartate 758 and aspartate 762. A helical membrane pass occupies residues 825 to 845 (IVALVINFVSACIIGSAPLTA). Topologically, residues 846–847 (VQ) are cytoplasmic. Transmembrane regions (helical) follow at residues 848–868 (LLWV…TEPP) and 892–912 (NIMG…FGGE). Residues 913–960 (RLLNIKGADSKSIINTLIFNSFVFCQVFNEINSREMQKINVFRGIISN) are Cytoplasmic-facing. Helical transmembrane passes span 961–981 (WIFI…IEFL) and 995–1015 (WLLS…LKCI). The Cytoplasmic segment spans residues 1016-1039 (PVGSGETSATPNGYRPLANGPDDI).

This sequence belongs to the cation transport ATPase (P-type) (TC 3.A.3) family. Type IIB subfamily.

The protein resides in the membrane. It catalyses the reaction Ca(2+)(in) + ATP + H2O = Ca(2+)(out) + ADP + phosphate + H(+). Activated by calmodulin. In terms of biological role, this magnesium-dependent enzyme catalyzes the hydrolysis of ATP coupled with the translocation of calcium from the cytosol out of the cell, into the endoplasmic reticulum, or into organelles. This is Probable calcium-transporting ATPase 9, plasma membrane-type from Oryza sativa subsp. japonica (Rice).